Reading from the N-terminus, the 352-residue chain is tRNA (guanine-N(1)-)-methyltransferase (352 aa).

S-adenosyl-L-methionine-binding positions include G109 and 129–134 (IGDYVL).

Belongs to the RNA methyltransferase TrmD family. Homodimer.

The protein resides in the cytoplasm. It catalyses the reaction guanosine(37) in tRNA + S-adenosyl-L-methionine = N(1)-methylguanosine(37) in tRNA + S-adenosyl-L-homocysteine + H(+). In terms of biological role, specifically methylates guanosine-37 in various tRNAs. The polypeptide is tRNA (guanine-N(1)-)-methyltransferase (Chlamydia trachomatis serovar A (strain ATCC VR-571B / DSM 19440 / HAR-13)).